The chain runs to 294 residues: HTH-type transcriptional regulator DgdR (294 aa).

Residues 14-70 form the HTH lysR-type domain; that stretch reads LEIDLLRSFVVIAEVRALSRAAARVGRTQSALSQQMKRLEDIVDQPLFQRTGRGVVL. The H-T-H motif DNA-binding region spans 31–50; the sequence is LSRAAARVGRTQSALSQQMK.

The protein belongs to the LysR transcriptional regulatory family.

The chain is HTH-type transcriptional regulator DgdR (dgdR) from Burkholderia cepacia (Pseudomonas cepacia).